The primary structure comprises 102 residues: MSRTDTSEKRKEDFIYVSLNIYLCVRLYIMHLISSNTPKSHCSVRFLCFFLSALAITSNRNFFRPEKMPTRIFCNDTLMVSPKTEKFLERFTNQKLAKLEVR.

This is an uncharacterized protein from Saccharomyces cerevisiae (strain ATCC 204508 / S288c) (Baker's yeast).